Here is a 156-residue protein sequence, read N- to C-terminus: Mediator of RNA polymerase II transcription subunit 28 (156 aa).

A disordered region spans residues 1–38; it reads MDYQQKPPQSSDPSPSPPDRPPGIRSPETPSNNQNNDI. A coiled-coil region spans residues 104–156; the sequence is PSRAESLKKDIAVMEEELKTKDELIKKHMRLFQESQKLVKEQIEKHRDELEKV.

It belongs to the Mediator complex subunit 28 family. In terms of assembly, dimers. Component of the Mediator complex. Interacts with GEBPL.

It is found in the nucleus. Functionally, component of the Mediator complex, a coactivator involved in the regulated transcription of nearly all RNA polymerase II-dependent genes. Mediator functions as a bridge to convey information from gene-specific regulatory proteins to the basal RNA polymerase II transcription machinery. The Mediator complex, having a compact conformation in its free form, is recruited to promoters by direct interactions with regulatory proteins and serves for the assembly of a functional pre-initiation complex with RNA polymerase II and the general transcription factors. The protein is Mediator of RNA polymerase II transcription subunit 28 of Arabidopsis thaliana (Mouse-ear cress).